A 1130-amino-acid polypeptide reads, in one-letter code: Integrin alpha-6 (1130 aa).

The signal sequence occupies residues 1-23 (MAAAGQLCLLYLSAGLLSRLGAA). The Extracellular segment spans residues 24 to 1050 (FNLDTREDNV…FPSKTVAQYS (1027 aa)). 7 FG-GAP repeats span residues 30 to 95 (EDNV…GPCT), 101 to 166 (NDAD…IEDD), 176 to 229 (DGRL…FFDM), 283 to 339 (EQPD…KSAH), 340 to 402 (LLPE…RWNN), 403 to 458 (VKPI…GINT), and 459 to 518 (KPTQ…VTPN). N78 is a glycosylation site (N-linked (GlcNAc...) asparagine). Cystine bridges form between C86/C94, C131/C154, and C175/C188. N223 and N323 each carry an N-linked (GlcNAc...) asparagine glycan. Ca(2+)-binding residues include D363, N365, D367, and D371. An N-linked (GlcNAc...) asparagine glycan is attached at N409. Residues D425, N427, D429, Y431, D433, D480, D482, N484, Y486, and D488 each contribute to the Ca(2+) site. Disulfide bonds link C528–C535, C541–C601, C665–C671, and C765–C776. N770, N787, N930, and N966 each carry an N-linked (GlcNAc...) asparagine glycan. Cystine bridges form between C920–C967 and C973–C978. N-linked (GlcNAc...) asparagine glycosylation occurs at N997. A helical membrane pass occupies residues 1051 to 1076 (GVPWWIILVAILAGILMLALLVFILW). Phosphoserine is present on residues V1059 and G1064. The segment at 1077–1083 (KCGFFKR) is interaction with HPS5. At 1077-1130 (KCGFFKRSRYDDSVPRYHAVRIRKEEREIKDEKYIDNLEKKQWITKWNENESYS) the chain is on the cytoplasmic side. The S-palmitoyl cysteine; by DHHC3 moiety is linked to residue C1078. Residues 1079–1083 (GFFKR) carry the GFFKR motif motif. Position 1103 is a phosphoserine (R1103).

Belongs to the integrin alpha chain family. Heterodimer of an alpha and a beta subunit. The alpha subunit is composed of a heavy and a light chain linked by a disulfide bond. Alpha-6 associates with either beta-1 (ITGB1) or beta-4 (ITGB4) to form ITGA6:ITGB1 and ITGA6:ITGB4, respectively. ITGA6:ITGB1 is found in a complex with CD9; interaction takes place in oocytes and is involved in sperm-egg fusion. ITGA6:ITGB4 is found in a ternary complex with NRG1 and ERBB3. ITGA6:ITGB4 is found in a ternary complex with IGF1 and IGF1R. ITGA6:ITGB4 interacts with IGF2. Interacts with ADAM9. Interacts with RAB21. Interacts with MDK. ITGA6:ITGB1 interacts with MDK; this interaction mediates MDK-induced neurite outgrowth. Interacts with CD82; this interaction down-regulates ITGA6-mediated cell adhesion. Post-translationally, isoforms containing segment A, but not segment B, are the major targets for PMA-induced phosphorylation. Phosphorylation occurs on 'Ser-1103' of isoform alpha-6X1X2A. Phosphorylation is not required for the induction of integrin alpha-6A/beta-1 high affinity but may reduce the affinity for ligand. Undergoes PLAU-mediated cleavage at residues Arg-634-635-Arg in a time-dependent manner to produce processed integrin alpha-6 (alpha6p). Production of alpha6p enhances prostate cancer cell invasion and migration. In terms of processing, palmitoylation by DHHC3 enhances stability and cell surface expression. As to expression, integrin alpha-6/beta-4 is predominantly expressed by epithelia. Isoforms containing segment X1 are ubiquitously expressed. Isoforms containing segment X1X2 are expressed in heart, kidney, placenta, colon, duodenum, myoblasts and myotubes, and in a limited number of cell lines; they are always coexpressed with the ubiquitous isoform containing segment X1. In some tissues (e.g. Salivary gland), isoforms containing cytoplasmic segment A and isoforms containing segment B are detected while in others, only isoforms containing one cytoplasmic segment are found (segment A in epidermis and segment B in kidney). Processed integrin alpha-6: Expressed at low levels in normal prostate tissue with elevated levels in prostate cancer tissue (at protein level).

The protein localises to the cell membrane. In terms of biological role, integrin alpha-6/beta-1 (ITGA6:ITGB1) is a receptor for laminin on platelets. Integrin alpha-6/beta-1 (ITGA6:ITGB1) is present in oocytes and is involved in sperm-egg fusion. Integrin alpha-6/beta-4 (ITGA6:ITGB4) is a receptor for laminin in epithelial cells and it plays a critical structural role in the hemidesmosome. ITGA6:ITGB4 binds to NRG1 (via EGF domain) and this binding is essential for NRG1-ERBB signaling. ITGA6:ITGB4 binds to IGF1 and this binding is essential for IGF1 signaling. ITGA6:ITGB4 binds to IGF2 and this binding is essential for IGF2 signaling. This Homo sapiens (Human) protein is Integrin alpha-6 (ITGA6).